The primary structure comprises 86 residues: U15-lycotoxin-Ls1g (86 aa).

Residues 1–20 (MNSKIFAVLLLLGLLSCVLS) form the signal peptide. The WAP domain occupies 21-66 (DQYCPKSSITACKKMNIRNDCCKDDDCTGGSWCCATPCGNFCKYPA). Disulfide bonds link C24–C54, C32–C58, C41–C53, C42–C80, and C47–C62.

Belongs to the venom protein 11 family. 01 (wap-1) subfamily. Post-translationally, contains 5 disulfide bonds. As to expression, expressed by the venom gland.

The protein resides in the secreted. Functionally, has antibacterial activity. This Lycosa singoriensis (Wolf spider) protein is U15-lycotoxin-Ls1g.